The primary structure comprises 211 residues: MNQTLETGTTTVGITLKDAVIMATERRVTMENFIMHKNGKKLFQIDTYTGMTIAGLVGDAQVLVRYMKAELELYRLQRRVNMPIEAVATLLSNMLNQVKYMPYMVQLLVGGIDTAPHVFSIDAAGGSVEDIYASTGSGSPFVYGVLESQYSEKMTVDEGVDLVIRAISAAKQRDSASGGMIDVAVITRKDGYVQLPTDQIESRIRKLGLIL.

The propeptide at 1-8 is removed in mature form; by autocatalysis; the sequence is MNQTLETG. Thr9 functions as the Nucleophile in the catalytic mechanism.

Belongs to the peptidase T1B family. In terms of assembly, the 20S proteasome core is composed of 14 alpha and 14 beta subunits that assemble into four stacked heptameric rings, resulting in a barrel-shaped structure. The two inner rings, each composed of seven catalytic beta subunits, are sandwiched by two outer rings, each composed of seven alpha subunits. The catalytic chamber with the active sites is on the inside of the barrel. Has a gated structure, the ends of the cylinder being occluded by the N-termini of the alpha-subunits. Is capped at one or both ends by the proteasome regulatory ATPase, PAN.

It localises to the cytoplasm. The enzyme catalyses Cleavage of peptide bonds with very broad specificity.. With respect to regulation, the formation of the proteasomal ATPase PAN-20S proteasome complex, via the docking of the C-termini of PAN into the intersubunit pockets in the alpha-rings, triggers opening of the gate for substrate entry. Interconversion between the open-gate and close-gate conformations leads to a dynamic regulation of the 20S proteasome proteolysis activity. In terms of biological role, component of the proteasome core, a large protease complex with broad specificity involved in protein degradation. The T.acidophilum proteasome is able to cleave oligopeptides after Tyr, Leu, Phe, and to a lesser extent after Glu and Arg. Thus, displays chymotrypsin-like activity and low level of caspase-like and trypsin-like activities. The protein is Proteasome subunit beta of Thermoplasma acidophilum (strain ATCC 25905 / DSM 1728 / JCM 9062 / NBRC 15155 / AMRC-C165).